A 606-amino-acid chain; its full sequence is Transcription factor glial cells missing 2 (606 aa).

The span at D20–S37 shows a compositional bias: polar residues. 3 disordered regions span residues D20–R65, E475–Y501, and T561–H606. Residues P44–G61 are compositionally biased toward low complexity. A DNA-binding region (GCM) is located at residues R65–F224. Residues F490–Y501 are compositionally biased toward polar residues. A compositionally biased stretch (pro residues) spans P569–T580. A compositionally biased stretch (basic residues) spans Y583–H593. The span at P594–H606 shows a compositional bias: low complexity.

In terms of tissue distribution, expressed in glial lineages within embryonic procephalic mesoderm. Expression is highest in hemocyte primordia and longitudinal and nerve root ganglia.

The protein localises to the nucleus. Functionally, transcription factor with a minor role promoting glial cell differentiation and a more significant role in hematocyte differentiation. Gcm2, together with gcm, is required for the proliferation of plasmatocyte precursors, the expression of Croquemort protein, and the ability of plasmatocytes to convert into macrophages. The chain is Transcription factor glial cells missing 2 (gcm2) from Drosophila melanogaster (Fruit fly).